Consider the following 432-residue polypeptide: Trigger factor (432 aa).

Positions 161–246 (GSRATIDFVG…LNKVEARELP (86 aa)) constitute a PPIase FKBP-type domain.

It belongs to the FKBP-type PPIase family. Tig subfamily.

It is found in the cytoplasm. The enzyme catalyses [protein]-peptidylproline (omega=180) = [protein]-peptidylproline (omega=0). Its function is as follows. Involved in protein export. Acts as a chaperone by maintaining the newly synthesized protein in an open conformation. Functions as a peptidyl-prolyl cis-trans isomerase. The protein is Trigger factor of Vibrio atlanticus (strain LGP32) (Vibrio splendidus (strain Mel32)).